The sequence spans 114 residues: Probable non-functional T cell receptor beta variable 5-3 (114 aa).

A signal peptide spans 1–21 (MGPGLLCWELLYLLGAGPVEA). In terms of domain architecture, Ig-like spans 22-114 (GVTQSPTHLI…SALYLCARSL (93 aa)). A disulfide bond links C42 and C110. The N-linked (GlcNAc...) asparagine glycan is linked to N96.

Alpha-beta TR is a heterodimer composed of an alpha and beta chain; disulfide-linked. The alpha-beta TR is associated with the transmembrane signaling CD3 coreceptor proteins to form the TR-CD3 (TcR or TCR). The assembly of alpha-beta TR heterodimers with CD3 occurs in the endoplasmic reticulum where a single alpha-beta TR heterodimer associates with one CD3D-CD3E heterodimer, one CD3G-CD3E heterodimer and one CD247 homodimer forming a stable octameric structure. CD3D-CD3E and CD3G-CD3E heterodimers preferentially associate with TR alpha and TR beta chains, respectively. The association of the CD247 homodimer is the last step of TcR assembly in the endoplasmic reticulum and is required for transport to the cell surface.

It is found in the cell membrane. Its function is as follows. Probable non-functional open reading frame (ORF) of V region of the variable domain of T cell receptor (TR) beta chain. Non-functional ORF generally cannot participate in the synthesis of a productive T cell receptor (TR) chain due to altered V-(D)-J or switch recombination and/or splicing site (at mRNA level) and/or conserved amino acid change (protein level). Alpha-beta T cell receptors are antigen specific receptors which are essential to the immune response and are present on the cell surface of T lymphocytes. Recognize peptide-major histocompatibility (MH) (pMH) complexes that are displayed by antigen presenting cells (APC), a prerequisite for efficient T cell adaptive immunity against pathogens. Binding of alpha-beta TR to pMH complex initiates TR-CD3 clustering on the cell surface and intracellular activation of LCK that phosphorylates the ITAM motifs of CD3G, CD3D, CD3E and CD247 enabling the recruitment of ZAP70. In turn ZAP70 phosphorylates LAT, which recruits numerous signaling molecules to form the LAT signalosome. The LAT signalosome propagates signal branching to three major signaling pathways, the calcium, the mitogen-activated protein kinase (MAPK) kinase and the nuclear factor NF-kappa-B (NF-kB) pathways, leading to the mobilization of transcription factors that are critical for gene expression and essential for T cell growth and differentiation. The T cell repertoire is generated in the thymus, by V-(D)-J rearrangement. This repertoire is then shaped by intrathymic selection events to generate a peripheral T cell pool of self-MH restricted, non-autoaggressive T cells. Post-thymic interaction of alpha-beta TR with the pMH complexes shapes TR structural and functional avidity. The chain is Probable non-functional T cell receptor beta variable 5-3 from Homo sapiens (Human).